The chain runs to 402 residues: Homoserine O-acetyltransferase (402 aa).

The AB hydrolase-1 domain maps to 38 to 359 (NAVLVCHALT…HGHDAFLVEP (322 aa)). The active-site Nucleophile is Ser146. Arg217 lines the substrate pocket. Catalysis depends on residues Asp319 and His352. Asp353 provides a ligand contact to substrate.

Belongs to the AB hydrolase superfamily. MetX family. Homodimer.

It localises to the cytoplasm. It carries out the reaction L-homoserine + acetyl-CoA = O-acetyl-L-homoserine + CoA. Its pathway is amino-acid biosynthesis; L-methionine biosynthesis via de novo pathway; O-acetyl-L-homoserine from L-homoserine: step 1/1. Its function is as follows. Transfers an acetyl group from acetyl-CoA to L-homoserine, forming acetyl-L-homoserine. The protein is Homoserine O-acetyltransferase of Haloarcula marismortui (strain ATCC 43049 / DSM 3752 / JCM 8966 / VKM B-1809) (Halobacterium marismortui).